Here is a 248-residue protein sequence, read N- to C-terminus: Probable transcriptional regulatory protein blr1534 (248 aa).

Positions 1–21 are disordered; that stretch reads MAGHSQFKNIMHRKGRQDAQK.

This sequence belongs to the TACO1 family.

The protein localises to the cytoplasm. The protein is Probable transcriptional regulatory protein blr1534 of Bradyrhizobium diazoefficiens (strain JCM 10833 / BCRC 13528 / IAM 13628 / NBRC 14792 / USDA 110).